Reading from the N-terminus, the 194-residue chain is Small ribosomal subunit protein eS7 (194 aa).

This sequence belongs to the eukaryotic ribosomal protein eS7 family.

This is Small ribosomal subunit protein eS7 (RpS7) from Drosophila melanogaster (Fruit fly).